A 284-amino-acid chain; its full sequence is Heat stress transcription factor B-1 (284 aa).

Residues Pro12–Ser106 mediate DNA binding. The interval Val118 to Asn151 is disordered. Positions Ser134–Ser148 are enriched in low complexity. Residues Gly147–Leu192 are hydrophobic repeat HR-A/B. The Nuclear localization signal signature appears at Arg247 to Arg252.

Belongs to the HSF family. Class B subfamily. Homotrimer. Post-translationally, exhibits temperature-dependent phosphorylation.

It localises to the nucleus. Its function is as follows. Transcriptional regulator that specifically binds DNA sequence 5'-AGAAnnTTCT-3' known as heat shock promoter elements (HSE). The chain is Heat stress transcription factor B-1 (HSFB1) from Arabidopsis thaliana (Mouse-ear cress).